Reading from the N-terminus, the 480-residue chain is Glutamyl-tRNA(Gln) amidotransferase subunit A (480 aa).

Catalysis depends on charge relay system residues Lys-70 and Ser-145. Residue Ser-169 is the Acyl-ester intermediate of the active site.

Belongs to the amidase family. GatA subfamily. In terms of assembly, heterotrimer of A, B and C subunits.

It carries out the reaction L-glutamyl-tRNA(Gln) + L-glutamine + ATP + H2O = L-glutaminyl-tRNA(Gln) + L-glutamate + ADP + phosphate + H(+). In terms of biological role, allows the formation of correctly charged Gln-tRNA(Gln) through the transamidation of misacylated Glu-tRNA(Gln) in organisms which lack glutaminyl-tRNA synthetase. The reaction takes place in the presence of glutamine and ATP through an activated gamma-phospho-Glu-tRNA(Gln). The polypeptide is Glutamyl-tRNA(Gln) amidotransferase subunit A (Lactobacillus delbrueckii subsp. bulgaricus (strain ATCC BAA-365 / Lb-18)).